Here is a 438-residue protein sequence, read N- to C-terminus: GDP-mannose 6-dehydrogenase (438 aa).

The NAD(+) site is built by Tyr-10, Val-11, Asp-30, Lys-35, Thr-86, and Thr-124. GDP-alpha-D-mannuronate-binding residues include Glu-161, Lys-210, Asn-214, His-217, Asn-225, Tyr-256, Tyr-257, Arg-259, Phe-262, and Gly-265. Residue Cys-268 is part of the active site. Lys-271 serves as a coordination point for NAD(+). Residue Lys-324 coordinates GDP-alpha-D-mannuronate. Arg-331 contacts NAD(+).

Belongs to the UDP-glucose/GDP-mannose dehydrogenase family.

The catalysed reaction is GDP-alpha-D-mannose + 2 NAD(+) + H2O = GDP-alpha-D-mannuronate + 2 NADH + 3 H(+). Its pathway is glycan biosynthesis; alginate biosynthesis. Functionally, catalyzes the oxidation of guanosine diphospho-D-mannose (GDP-D-mannose) to GDP-D-mannuronic acid, a precursor for alginate polymerization. The alginate layer causes a mucoid phenotype and provides a protective barrier against host immune defenses and antibiotics. The chain is GDP-mannose 6-dehydrogenase (algD) from Pseudomonas syringae pv. syringae.